We begin with the raw amino-acid sequence, 344 residues long: Protein RecA (344 aa).

65 to 72 (GPESSGKT) contacts ATP. Residues 323-337 (ELREKFQPAEAPREA) are compositionally biased toward basic and acidic residues. A disordered region spans residues 323–344 (ELREKFQPAEAPREAGDDEDKE).

This sequence belongs to the RecA family.

Its subcellular location is the cytoplasm. Functionally, can catalyze the hydrolysis of ATP in the presence of single-stranded DNA, the ATP-dependent uptake of single-stranded DNA by duplex DNA, and the ATP-dependent hybridization of homologous single-stranded DNAs. It interacts with LexA causing its activation and leading to its autocatalytic cleavage. This is Protein RecA from Xanthomonas axonopodis pv. citri (strain 306).